A 2390-amino-acid polypeptide reads, in one-letter code: Spectrin beta chain, non-erythrocytic 2 (2390 aa).

Serine 2 bears the N-acetylserine mark. The tract at residues 2–278 (SSTLSPTDFD…IITYVATYYH (277 aa)) is actin-binding. Phosphoserine occurs at positions 6 and 31. Calponin-homology (CH) domains are found at residues 57 to 161 (AVQK…LRFQ) and 176 to 281 (KSAK…HYFS). Spectrin repeat units lie at residues 306 to 414 (LVEK…LALR), 427 to 527 (AARF…RERL), 532 to 639 (ELQK…RLEE), 642 to 744 (RLWR…QRLA), 749 to 849 (LYQF…RALE), and 855 to 954 (YTML…KAAL). Residue serine 959 is modified to Phosphoserine. 11 Spectrin repeats span residues 960 to 1063 (IQNY…SLGE), 1066 to 1169 (RLQD…GRLA), 1174 to 1262 (FQGF…RHKK), 1279 to 1379 (EQQH…ARSL), 1384 to 1485 (RAEL…RRLQ), 1489 to 1586 (EQHQ…RLED), 1589 to 1692 (RAQQ…RLQE), 1696 to 1797 (LCQL…GQVL), 1801 to 1904 (YELQ…QLLL), 1910 to 2010 (FRFF…DWLQ), and 2017 to 2076 (VFGR…EKLT). At serine 1073 the chain carries Phosphoserine. Positions 2081–2096 (REKERKRKREEEERRK) are enriched in basic and acidic residues. 2 disordered regions span residues 2081 to 2222 (REKE…EQME) and 2331 to 2390 (SSAS…KKNK). The span at 2116–2125 (QTASDTTWDG) shows a compositional bias: polar residues. A phosphoserine mark is found at serine 2171 and serine 2199. Residues 2218–2328 (QEQMEGMLCR…WLRVVNAAIA (111 aa)) enclose the PH domain. Threonine 2354 carries the post-translational modification Phosphothreonine. The residue at position 2359 (serine 2359) is a Phosphoserine. A compositionally biased stretch (basic and acidic residues) spans 2370–2383 (RSKDGREREREKRF).

Belongs to the spectrin family. Highly expressed in brain, kidney, pancreas, and liver, and at lower levels in lung and placenta.

The protein resides in the cytoplasm. Its subcellular location is the cytoskeleton. It localises to the cell cortex. Probably plays an important role in neuronal membrane skeleton. The sequence is that of Spectrin beta chain, non-erythrocytic 2 (SPTBN2) from Homo sapiens (Human).